Consider the following 366-residue polypeptide: tRNA N6-adenosine threonylcarbamoyltransferase (366 aa).

Residues His-130, His-134, and Tyr-151 each coordinate a divalent metal cation. Substrate contacts are provided by residues 151 to 155 (YVSGG), Asp-183, Gly-198, Glu-202, and Asn-297. An a divalent metal cation-binding site is contributed by Asp-325.

The protein belongs to the KAE1 / TsaD family. Component of the EKC/KEOPS complex composed of at least BUD32, CGI121, GON7, KAE1 and PCC1; the whole complex dimerizes. Requires a divalent metal cation as cofactor.

It is found in the cytoplasm. It localises to the nucleus. The enzyme catalyses L-threonylcarbamoyladenylate + adenosine(37) in tRNA = N(6)-L-threonylcarbamoyladenosine(37) in tRNA + AMP + H(+). Component of the EKC/KEOPS complex that is required for the formation of a threonylcarbamoyl group on adenosine at position 37 (t(6)A37) in tRNAs that read codons beginning with adenine. The complex is probably involved in the transfer of the threonylcarbamoyl moiety of threonylcarbamoyl-AMP (TC-AMP) to the N6 group of A37. KAE1 likely plays a direct catalytic role in this reaction, but requires other protein(s) of the complex to fulfill this activity. The EKC/KEOPS complex also promotes both telomere uncapping and telomere elongation. The complex is required for efficient recruitment of transcriptional coactivators. The polypeptide is tRNA N6-adenosine threonylcarbamoyltransferase (Cryptococcus neoformans var. neoformans serotype D (strain JEC21 / ATCC MYA-565) (Filobasidiella neoformans)).